The primary structure comprises 4138 residues: MSPTTQHEPGSPRVPEPIAIVGSACRFPGGSSSPSKLWDLLREPRDVLRELPPERLNLNRYYHPDGERHGSTNVANRAYVLDEDVARFDAGFFGISPLEAAGMDPQQRLLLEVVHEATEAAGIPLAQLRGSPTSVHVGVMTNDWSHLQRRDPETMPRHTATGAAASIIANRVSYVFDLRGASETIDTACSSSLVALHSAARALRAGDCTRAVVAGVNLILDPDPFVFEAKLGMLSPGSRSRMWDKEADGYARGEGVAAVVLKTLRDALRDGDEVAGVVRATGVNSDGTGGGGGLTMPSAEAQTALIRRTYEEAGLDPVADRPQFFECHGTGTKAGDPVEARAISEAFVKGHRGEEGVPTVKQPLYVGSIKTVVGHLEGCAGLAGVIKVLLSLKHGVIPPNLLFNELNPDIAQYYGPLNIPTKAKPWPKLAPGVPLRASVNSFGFGGTNAHAIIERYDATQSYVVALKAGIPHLSRPITHRDSSDVSIPAPILLSARTGGALWRTVDAYARHLRQHPELSLADLSRFLHERRSTHRVRAHFSGASREALLDSMDAFVRTHAADAKSAATQGRIGHAPLLIDPKETPGVLGVFTGQGAQWPAMGRDMMRASPLFRRTIAECEGVLRALPGDDAPEWSLAEELTKEAPASRLAEAAIAQPLCTAVQLALVGALRAAGLRFDAVVGHSSGEIAATYAAGIITLQGAMQIAYYRGFHAKLARGPAGEAGGMLAVGLSPAEARELCARPEFTGRLQVAACNAPKSVTLSGDKEVVAAAREMLVAQGAFARELRVDTAYHSHHMLPCAAPYLESIRKCDVQVSRPTPGTCQWSSSVRGDAELLRADRSLEDLKGPYWVANMVQTVQFSRALEASIWHGGPFDLAVEVGPHPALKGPTEQTLKGVYGSVPFYTGVLKRDAPDAVSFSTAIGSVWAHLGPDFVDVPGYCRSVFSETGHDQEGPVTFVPDLPAYAWDHEETHWRESRISKRYRTGRDGYHELLGRRAVDDNEREVRWRNLLAVRDLPWTRGHTILGEVLLPGAAYVSMALEAGRRLAEDRGREARLLEVSEVDILRPVVVADGKDATETLFTVRILKEDLSTDYKSGGGLIKASFSFCVYSSASSTAIAHTCEGLIDVHLGPRLGSESEDEGSVPQLPQRQAPAPNLQEIDCEKLYAQFGTIGLEYSGIFRRMTSSRRHLGHATASASWAAADLGDAYMVHPAVLDVAFQTIFVAHAHPDSGQVNAALLPSRIERVRVAPSPAMQRIDGILSAEVDSWILHQTATSVTGNLDVHDADTGAPLLQVEGFEVRSVGERDAAADRLIFAETAWGPDVSVAGGLSDPIRDEAADATVKGLAEASERVSLFYARRLMAELSAEDRARASWYHERLLQALDHHLERLKGGVHPHLRAEWLADDDEVVRAIDAAFPKTVELQMLHAVGRNMASVVRGEKHMLEVMRVDNMLDRFYAEDKGMQQVNIFLANAVKEISFKFPRCKILEIGAGTGATTSAVLHALDDAFDTYTYTDLSVGFFETAMERFADSRHKMVFAALDVEKDLASQPGFAPHSYDLIIAANVLHATRDMAVTLRNVRALLRPGGYLVLNEHTGAGSLCATFNFGGLEGWWLAEEEDRRRSPLLSTARWDAQLRRAGFSGADHVAHDIPEGGEGGRQISLIVSQAVDERFWARVSPLSEMAELQEQEEEEMPLLLIGGKMTATARIFKEVRKLLPRRWRERVRLVDCVDSLDVEALPARCDVICLQELDAALFATPMTPRRLQILQTLLMNTANLLWVTHAQTSGSATPRAAMFRGITRVMAGEIPQINTQVIGVEPATVPSSTARHLLEAFLRLQSEHTRIATNSDGDDAQQSALWSHEPEIDILPDGTVMIPRVRLNRSLNETYNASSRTVAKTVDASCVPVQAVAGPTKMQLQPADEQTSLANGTDSTVRVKVEFTLHVPQAPDGTNLYLVCGWTLPTEAPDGTPNAVLAVSTVNASIIEVPSASAAVVADDDMQPDLLLRIFDHLAAQAVQVQLNPTGEHKARALIYGADERLAQLISTQSTFRDNKVYFASSQRWVPDDWIKVHPLSSKFALSQALPYGVQVFIDCLGTGESVDGRKMIVSCLPAARRVRRLDASLLLELPQFSAALASAYSHAKSVTCPDAGEPSRVDRFHATELAGRPSNSFASSVYITSWQDLGAVQVATPPLETQGMFRSDRTYLMVGAAGGVGTSICRWMVRNGARHVVVTSRTPTADPVMLAEAAHHGADVRVLPMDVCDRLAVHALVDTIRATMPPIAGVCNAAMVLRDKLFLDMDVDILNDTLGPKVDGTETLDALFSDDAALDFFVLLGSAATVASNAGQANYHCANLYMDALVRRRRARGLAASIIHVGFVCETGYVARLVDEARALTQRDAMRVTTLSETDVHHAFAQAVRGGRPGRSGGSHSIVMGIEPPSKALEAGRSLEAVRRKALWLSDPRFGHMVPYSTAASQTAVEQSAAADASAGGGSVGQQVAEASTEEEAAAAVRRAFSAKLEGILLLPPSSIGEDGAGRPVTDLGIDSLVAVEIRTWFLKQLRVDVPVMKILGGSTIGQLSTLAAKLARQQSPRKEGQMAGKEQGLPSPETQDKLVDDKEQKVQVTSSLAKADSLTQEMQASAHSHSDSATNPTPSSTASEADDSNSQSTRSTSTEPKTEDKVSAHVQLEPATADHHPKILREAPMSAAQARIWFLAEHMAEPDAYNMVFHYRVRGPLHLARLRRALHAVAAHHECLRMSFRADPHTGQPMQGLLACSAFQMTIRDEGDVEEELRRLRTRAWRLELGETLEIVALPGGELLFGYHHIVMDGIGWAVVLADLDRAYRMLPLDKAAAGSHVEFSEAQRQQEREGALDEPLAFWQAEFETIPEPLPQLSVSSPQRSVAAAGTHRVLRELPPARGAAIRAAGRQLRVSPFHLHLAVLQVVLARLAGIEDVCVGIVDANRGDARAARMVGCFVNMLPVRNQVRPGASLAEVARGAASKALAAFANGAAPLDRILDRVQAPRPVGGTPLFQAALNYRPASALMHEAPLGAECRMELVPGDIKDADNPFEVSVLLSELPGGGLGVEMFCQKAVYNIDGSEALLDAYVNVLGDFMTDASQRVRECAVYRQADVDEALTLGKGPEIKFGWPATLSERVMNICQKNSARTAIKDGSMTLSYASLASKVNDVASAIVSAGSGVGSRIAVLCEPSVDAIVAMLAILHIGAVYVPLDISLPEARHVALVSNCTPSLIVCHKATLERTHRLSTPGYESAQELVIDDLPPSSKQIDSAPLRAQPDAPAILLYTSGTTGTPKGVLLTQANFANHIALKSAHLGLDRDEVILQQSSLGFDMSLVQIFCALGNGGCLVIVPPDARRDPVELTSIVQQHEVSLTIATPSEYLAWLQYGSGCLAQATAWRHLCMGGEPISQLLKDELRRLGRKNLKVTNCYGPTETTAAVSFQLIDLESDSCSSQLGSEVSRYAVGKPLANYSIRIMDPVGAWLPVNHTGEIVTGGAGVALGYLGLSEETRAKFVQVDGEPGRFYRTGDTGRLLPDGTLLCFGRIEGDSQVKLRGLRIELQEVEAAILQASEGLLQAAGVSCRGDMLVAHCTLSPGKESTETDKTALLRRLSEVLPQFAVPAAIHIVPSLPNNSNGKLDRKAIAALPLPTSDCAAHASSSEKMTIQEGELRLLWERVLPRDAAGSRITPASDFFLRGGNSLLLMKLQAAIRDAMDVRVPTRALYQASTLSGMTRCVLAQRERQRRDEPPAEDIDWAAEVAVPPELLARADELNSSAAAASLRPRKTTGGLEILLTGATGFLGGQLLRHLLRSPAVSRIHCVAVPADEREHLEAGSEANGSSGKVACHTGNLAAADLGLAAAQRARLAQSVDVIVHAGAAGHCLNTYATLSAPNLSSTKSLAALALARSPPIPLFFASSNRVVLLTGETAPASPSSVASSLPPADGAQGYTASKWASEVFLESLTNAVTSPWRVSIHRPCALVGDGVPNTDALNVILRYAVEMRCVPSLPRERARGYLDFGTVDAVVAEMAADVLALADEEEGGAGVRYRHHSGGVKVPIHEFRAHMDKKYGERFESVDLAAWIPRAVEAGMDPLISAYLETFLETDEPLIFPYMGGKSD.

Positions 15–455 (PEPIAIVGSA…GTNAHAIIER (441 aa)) constitute a Ketosynthase family 3 (KS3) domain. Active-site for beta-ketoacyl synthase activity residues include C189, H328, and H375. The segment at 590 to 921 (VFTGQGAQWP…APDAVSFSTA (332 aa)) is malonyl-CoA:ACP transacylase (MAT) domain. Residues 990–1133 (HELLGRRAVD…GLIDVHLGPR (144 aa)) form an N-terminal hotdog fold region. The segment at 990 to 1306 (HELLGRRAVD…GFEVRSVGER (317 aa)) is dehydratase (DH) domain. One can recognise a PKS/mFAS DH domain in the interval 990–1309 (HELLGRRAVD…VRSVGERDAA (320 aa)). Residue H1022 is the Proton acceptor; for dehydratase activity of the active site. Residues 1157–1309 (LQEIDCEKLY…VRSVGERDAA (153 aa)) are C-terminal hotdog fold. The Proton donor; for dehydratase activity role is filled by D1216. A methyltransferase (MT) domain region spans residues 1456–1650 (RFYAEDKGMQ…FSGADHVAHD (195 aa)). The ketoreductase (KR) domain stretch occupies residues 2205 to 2379 (TYLMVGAAGG…AASIIHVGFV (175 aa)). One can recognise a Carrier 1 domain in the interval 2507 to 2587 (EAAAAVRRAF…QLSTLAAKLA (81 aa)). The residue at position 2547 (S2547) is an O-(pantetheine 4'-phosphoryl)serine. Residues 2587–2683 (ARQQSPRKEG…TEPKTEDKVS (97 aa)) are disordered. Residues 2610–2621 (TQDKLVDDKEQK) are compositionally biased toward basic and acidic residues. A compositionally biased stretch (polar residues) spans 2622 to 2643 (VQVTSSLAKADSLTQEMQASAH). The segment covering 2647 to 2659 (DSATNPTPSSTAS) has biased composition (low complexity). A compositionally biased stretch (polar residues) spans 2664 to 2675 (SNSQSTRSTSTE). The tract at residues 2701–3128 (REAPMSAAQA…ASQRVRECAV (428 aa)) is condensation (C) domain. Residues 3162 to 3564 (CQKNSARTAI…DGTLLCFGRI (403 aa)) are adenylation (A) (KR) domain. In terms of domain architecture, Carrier 2 spans 3680–3759 (EKMTIQEGEL…GMTRCVLAQR (80 aa)). S3719 carries the post-translational modification O-(pantetheine 4'-phosphoryl)serine. The segment at 3813-4045 (LTGATGFLGG…LDFGTVDAVV (233 aa)) is reductase (RED) domain.

It in the C-terminal section; belongs to the NRP synthetase family.

Hybrid PKS-NRPS synthetase; part of the gene cluster that mediates the biosynthesis of fumosorinone, a 2-pyridone alkaloid that acts as an inhibitor of protein tyrosine phosphatase 1B which is implicated asa negative regulator of insulin receptor signaling and a potential drug target for the treatment of type II diabetes and other associated metabolic syndromes. The polyketide-amino acid backbone of fumosorinone is first assembled by the PKS-NRPS hybrid fumoS. The PKS modules condense one acetyl-CoA starter unit with 7 malonyl-CoA units, programmed C-methylations occurring after the first 3 and the sixth extensions, and cycles of full reduction occurring after the first 2 extensions. Because fumoS lacks a designated enoyl reductase (ER) domain, the required activity is provided the enoyl reductase fumoC. Upon formation of the polyketide backbone on the thiotemplate, the polyketide is transferred to the NRPS module and linked to tyrosine to produce the acyltetramic acid intermediate called prefumosorinone A. The cytochrome P450 monooxygenase fumoA then probably catalyzes an unprecedented oxidative ring expansion of prefumosorinone A to form prefumosorinone B which contains the 2-pyridone core of fumosorinone. The cytochrome P450 monooxygenase fumoB might hydroxylate the nitrogen of prefumosorinone B, but not the acyltetramic acid prefumosorinone A, to form fumosorinone. The sequence is that of Fumosorinone synthetase from Cordyceps fumosorosea (strain ARSEF 2679) (Isaria fumosorosea).